Consider the following 209-residue polypeptide: Large ribosomal subunit protein uL3 (209 aa).

Gln-150 bears the N5-methylglutamine mark.

It belongs to the universal ribosomal protein uL3 family. As to quaternary structure, part of the 50S ribosomal subunit. Forms a cluster with proteins L14 and L19. In terms of processing, methylated by PrmB.

Its function is as follows. One of the primary rRNA binding proteins, it binds directly near the 3'-end of the 23S rRNA, where it nucleates assembly of the 50S subunit. The protein is Large ribosomal subunit protein uL3 of Vibrio parahaemolyticus serotype O3:K6 (strain RIMD 2210633).